A 292-amino-acid chain; its full sequence is Expansin-B11 (292 aa).

The first 27 residues, 1–27 (MAKSCTLVLLLVALVGLSLLVSPIACS), serve as a signal peptide directing secretion. A glycan (N-linked (GlcNAc...) asparagine) is linked at asparagine 51. One can recognise an Expansin-like EG45 domain in the interval 82–192 (GGACGYQTAV…RRVPCKYSGV (111 aa)). 3 disulfide bridges follow: cysteine 85–cysteine 114, cysteine 117–cysteine 187, and cysteine 122–cysteine 128. Residues 205–287 (FYFEVLIEFE…SWKPGVTYRS (83 aa)) form the Expansin-like CBD domain.

It belongs to the expansin family. Expansin B subfamily. In terms of tissue distribution, expressed in internodes.

It localises to the secreted. The protein localises to the cell wall. Its subcellular location is the membrane. Its function is as follows. May cause loosening and extension of plant cell walls by disrupting non-covalent bonding between cellulose microfibrils and matrix glucans. No enzymatic activity has been found. May be required for rapid internodal elongation in deepwater rice during submergence. This Oryza sativa subsp. japonica (Rice) protein is Expansin-B11 (EXPB11).